The chain runs to 59 residues: Photosystem II reaction center protein K (59 aa).

Residues 1 to 22 constitute a propeptide that is removed on maturation; the sequence is MLNIFSLICLNSDLYSSRFFLA. A helical transmembrane segment spans residues 38–58; that stretch reads MPVIPLFFLLLAFVWQAAVSF.

It belongs to the PsbK family. As to quaternary structure, PSII is composed of 1 copy each of membrane proteins PsbA, PsbB, PsbC, PsbD, PsbE, PsbF, PsbH, PsbI, PsbJ, PsbK, PsbL, PsbM, PsbT, PsbX, PsbY, PsbZ, Psb30/Ycf12, at least 3 peripheral proteins of the oxygen-evolving complex and a large number of cofactors. It forms dimeric complexes.

The protein resides in the plastid. It is found in the chloroplast thylakoid membrane. Functionally, one of the components of the core complex of photosystem II (PSII). PSII is a light-driven water:plastoquinone oxidoreductase that uses light energy to abstract electrons from H(2)O, generating O(2) and a proton gradient subsequently used for ATP formation. It consists of a core antenna complex that captures photons, and an electron transfer chain that converts photonic excitation into a charge separation. This is Photosystem II reaction center protein K from Oenothera elata subsp. hookeri (Hooker's evening primrose).